Here is a 247-residue protein sequence, read N- to C-terminus: Small ribosomal subunit protein uS3 (247 aa).

Positions 39-107 constitute a KH type-2 domain; sequence VRDYLRKKLD…PAQVNIEEIT (69 aa). The segment at 213–247 is disordered; sequence SVYNPPKEDKTRAPKRRGRSNSNRRNSDRANTDRG. Residues 237-247 are compositionally biased toward basic and acidic residues; sequence RNSDRANTDRG.

This sequence belongs to the universal ribosomal protein uS3 family. In terms of assembly, part of the 30S ribosomal subunit. Forms a tight complex with proteins S10 and S14.

In terms of biological role, binds the lower part of the 30S subunit head. Binds mRNA in the 70S ribosome, positioning it for translation. This chain is Small ribosomal subunit protein uS3, found in Psychrobacter sp. (strain PRwf-1).